The sequence spans 381 residues: Succinyl-diaminopimelate desuccinylase (381 aa).

His-69 serves as a coordination point for Zn(2+). Asp-71 is a catalytic residue. Asp-103 is a Zn(2+) binding site. The active-site Proton acceptor is the Glu-137. Zn(2+) contacts are provided by Glu-138, Glu-166, and His-355.

It belongs to the peptidase M20A family. DapE subfamily. In terms of assembly, homodimer. It depends on Zn(2+) as a cofactor. Co(2+) is required as a cofactor.

It carries out the reaction N-succinyl-(2S,6S)-2,6-diaminopimelate + H2O = (2S,6S)-2,6-diaminopimelate + succinate. Its pathway is amino-acid biosynthesis; L-lysine biosynthesis via DAP pathway; LL-2,6-diaminopimelate from (S)-tetrahydrodipicolinate (succinylase route): step 3/3. Functionally, catalyzes the hydrolysis of N-succinyl-L,L-diaminopimelic acid (SDAP), forming succinate and LL-2,6-diaminopimelate (DAP), an intermediate involved in the bacterial biosynthesis of lysine and meso-diaminopimelic acid, an essential component of bacterial cell walls. The sequence is that of Succinyl-diaminopimelate desuccinylase from Rickettsia rickettsii (strain Iowa).